The primary structure comprises 92 residues: Small ribosomal subunit protein uS19c (92 aa).

It belongs to the universal ribosomal protein uS19 family.

It localises to the plastid. The protein localises to the chloroplast. Its function is as follows. Protein S19 forms a complex with S13 that binds strongly to the 16S ribosomal RNA. This chain is Small ribosomal subunit protein uS19c, found in Piper cenocladum (Ant piper).